The sequence spans 563 residues: Eukaryotic translation initiation factor 3 subunit D-1 (563 aa).

A disordered region spans residues 98 to 136; it reads VQKPPHQRGRFRNMRGRGGRGRNPRGGLNNHHHHGMTTL. Residues 100 to 120 show a composition bias toward basic residues; the sequence is KPPHQRGRFRNMRGRGGRGRN. The tract at residues 291-305 is RNA gate; it reads EFDLLTVNESSVEPP.

The protein belongs to the eIF-3 subunit D family. Component of the eukaryotic translation initiation factor 3 (eIF-3) complex. The eIF-3 complex interacts with pix.

It is found in the cytoplasm. Its function is as follows. mRNA cap-binding component of the eukaryotic translation initiation factor 3 (eIF-3) complex, which is involved in protein synthesis of a specialized repertoire of mRNAs and, together with other initiation factors, stimulates binding of mRNA and methionyl-tRNAi to the 40S ribosome. The eIF-3 complex specifically targets and initiates translation of a subset of mRNAs involved in cell proliferation. In the eIF-3 complex, eif3d specifically recognizes and binds the 7-methylguanosine cap of a subset of mRNAs. The protein is Eukaryotic translation initiation factor 3 subunit D-1 of Drosophila pseudoobscura pseudoobscura (Fruit fly).